The sequence spans 74 residues: ATP synthase subunit 9, mitochondrial (74 aa).

2 consecutive transmembrane segments (helical) span residues 16-36 (GLIG…IGVS) and 50-70 (ILGF…AFLL).

Belongs to the ATPase C chain family. As to quaternary structure, F-type ATPases have 2 components, CF(1) - the catalytic core - and CF(0) - the membrane proton channel. CF(1) has five subunits: alpha(3), beta(3), gamma(1), delta(1), epsilon(1). CF(0) has three main subunits: a, b and c.

It is found in the mitochondrion inner membrane. In terms of biological role, mitochondrial membrane ATP synthase (F(1)F(0) ATP synthase or Complex V) produces ATP from ADP in the presence of a proton gradient across the membrane which is generated by electron transport complexes of the respiratory chain. F-type ATPases consist of two structural domains, F(1) - containing the extramembraneous catalytic core and F(0) - containing the membrane proton channel, linked together by a central stalk and a peripheral stalk. During catalysis, ATP synthesis in the catalytic domain of F(1) is coupled via a rotary mechanism of the central stalk subunits to proton translocation. Part of the complex F(0) domain. A homomeric c-ring of probably 10 subunits is part of the complex rotary element. This chain is ATP synthase subunit 9, mitochondrial (atp-9), found in Neurospora crassa (strain ATCC 24698 / 74-OR23-1A / CBS 708.71 / DSM 1257 / FGSC 987).